A 273-amino-acid polypeptide reads, in one-letter code: Large ribosomal subunit protein uL2 (273 aa).

Positions 221-262 (RGTAMNPVDHPHGGGEGRNFGKHPVTPWGVQTKGKKTRHNKR) are disordered. Over residues 253-262 (KGKKTRHNKR) the composition is skewed to basic residues.

Belongs to the universal ribosomal protein uL2 family. In terms of assembly, part of the 50S ribosomal subunit. Forms a bridge to the 30S subunit in the 70S ribosome.

One of the primary rRNA binding proteins. Required for association of the 30S and 50S subunits to form the 70S ribosome, for tRNA binding and peptide bond formation. It has been suggested to have peptidyltransferase activity; this is somewhat controversial. Makes several contacts with the 16S rRNA in the 70S ribosome. The sequence is that of Large ribosomal subunit protein uL2 from Haemophilus ducreyi (strain 35000HP / ATCC 700724).